We begin with the raw amino-acid sequence, 178 residues long: MFDIGWSELVVIAVVALIAIGPKELPGVLRMVGQWMGKARRMAAEFQGQFNEAMREADMAELKKSFDEVRDATSGLTSGNLMTKLTDSLGEPPKLEDLDKPAANRPAADMSAASANDVPASGSIAPEAAIPKTGTEADAKALASEPLAITPEFQHATPEPAPATHETPHEAVKDAKAS.

The chain crosses the membrane as a helical span at residues 1–21 (MFDIGWSELVVIAVVALIAIG). Residues 77–86 (TSGNLMTKLT) are compositionally biased toward polar residues. The segment at 77-178 (TSGNLMTKLT…HEAVKDAKAS (102 aa)) is disordered. A compositionally biased stretch (basic and acidic residues) spans 93–102 (PKLEDLDKPA). Over residues 155-165 (HATPEPAPATH) the composition is skewed to low complexity. Residues 166–178 (ETPHEAVKDAKAS) show a composition bias toward basic and acidic residues.

It belongs to the TatB family. In terms of assembly, the Tat system comprises two distinct complexes: a TatABC complex, containing multiple copies of TatA, TatB and TatC subunits, and a separate TatA complex, containing only TatA subunits. Substrates initially bind to the TatABC complex, which probably triggers association of the separate TatA complex to form the active translocon.

The protein localises to the cell inner membrane. In terms of biological role, part of the twin-arginine translocation (Tat) system that transports large folded proteins containing a characteristic twin-arginine motif in their signal peptide across membranes. Together with TatC, TatB is part of a receptor directly interacting with Tat signal peptides. TatB may form an oligomeric binding site that transiently accommodates folded Tat precursor proteins before their translocation. The protein is Sec-independent protein translocase protein TatB of Nitrobacter hamburgensis (strain DSM 10229 / NCIMB 13809 / X14).